A 368-amino-acid chain; its full sequence is Acetyl-coenzyme A carboxylase carboxyl transferase subunit alpha (368 aa).

One can recognise a CoA carboxyltransferase C-terminal domain in the interval 44 to 294 (EIDNKLQEIY…RKSIEKNLNE (251 aa)).

Belongs to the AccA family. As to quaternary structure, acetyl-CoA carboxylase is a heterohexamer composed of biotin carboxyl carrier protein (AccB), biotin carboxylase (AccC) and two subunits each of ACCase subunit alpha (AccA) and ACCase subunit beta (AccD).

The protein resides in the cytoplasm. It catalyses the reaction N(6)-carboxybiotinyl-L-lysyl-[protein] + acetyl-CoA = N(6)-biotinyl-L-lysyl-[protein] + malonyl-CoA. The protein operates within lipid metabolism; malonyl-CoA biosynthesis; malonyl-CoA from acetyl-CoA: step 1/1. In terms of biological role, component of the acetyl coenzyme A carboxylase (ACC) complex. First, biotin carboxylase catalyzes the carboxylation of biotin on its carrier protein (BCCP) and then the CO(2) group is transferred by the carboxyltransferase to acetyl-CoA to form malonyl-CoA. This chain is Acetyl-coenzyme A carboxylase carboxyl transferase subunit alpha, found in Pelagibacter ubique (strain HTCC1062).